The sequence spans 240 residues: Uridylate kinase (240 aa).

Residue 12–15 participates in ATP binding; that stretch reads KLSG. The segment at 20–25 is involved in allosteric activation by GTP; the sequence is GKQGFG. Glycine 54 is a binding site for UMP. ATP contacts are provided by glycine 55 and arginine 59. UMP-binding positions include aspartate 74 and 135–142; that span reads TGNPYFST. ATP is bound by residues asparagine 163, tyrosine 169, and aspartate 172.

The protein belongs to the UMP kinase family. In terms of assembly, homohexamer.

The protein resides in the cytoplasm. The catalysed reaction is UMP + ATP = UDP + ADP. It participates in pyrimidine metabolism; CTP biosynthesis via de novo pathway; UDP from UMP (UMPK route): step 1/1. With respect to regulation, allosterically activated by GTP. Inhibited by UTP. In terms of biological role, catalyzes the reversible phosphorylation of UMP to UDP. This Geobacillus kaustophilus (strain HTA426) protein is Uridylate kinase.